The primary structure comprises 442 residues: Proline--tRNA ligase (442 aa).

It belongs to the class-II aminoacyl-tRNA synthetase family. ProS type 2 subfamily. Homodimer.

The protein localises to the cytoplasm. The enzyme catalyses tRNA(Pro) + L-proline + ATP = L-prolyl-tRNA(Pro) + AMP + diphosphate. Functionally, catalyzes the attachment of proline to tRNA(Pro) in a two-step reaction: proline is first activated by ATP to form Pro-AMP and then transferred to the acceptor end of tRNA(Pro). The chain is Proline--tRNA ligase from Brucella melitensis biotype 2 (strain ATCC 23457).